The chain runs to 207 residues: Cytochrome c biogenesis ATP-binding export protein CcmA (207 aa).

In terms of domain architecture, ABC transporter spans 2 to 204 (LECENLSCTR…TTIDIRNFNR (203 aa)). 34-41 (GPNGSGKT) contacts ATP.

It belongs to the ABC transporter superfamily. CcmA exporter (TC 3.A.1.107) family. As to quaternary structure, the complex is composed of two ATP-binding proteins (CcmA) and two transmembrane proteins (CcmB).

It localises to the cell membrane. The catalysed reaction is heme b(in) + ATP + H2O = heme b(out) + ADP + phosphate + H(+). In terms of biological role, part of the ABC transporter complex CcmAB involved in the biogenesis of c-type cytochromes; once thought to export heme, this seems not to be the case, but its exact role is uncertain. Responsible for energy coupling to the transport system. The protein is Cytochrome c biogenesis ATP-binding export protein CcmA of Wolbachia pipientis wMel.